Consider the following 589-residue polypeptide: TAF5-like RNA polymerase II p300/CBP-associated factor-associated factor 65 kDa subunit 5L (589 aa).

The segment covering Ala211–Asn221 has biased composition (polar residues). A disordered region spans residues Ala211 to Ser230. WD repeat units lie at residues Asn266–Glu305, Gly340–Leu379, Gly382–Ile421, Gly424–Leu463, Gly466–Glu505, and Gly508–Pro547.

This sequence belongs to the WD repeat TAF5 family. As to quaternary structure, the PCAF complex is composed of a number of TBP-associated factors (TAFS), such as TAF5, TAF5L, TAF6, TAF6L, TAF9, TAF10 and TAF12, PCAF, and also PCAF-associated factors (PAFs), such as TADA2L/ADA2, TADA3L/ADA3 and SPT3. Component of the STAGA transcription coactivator-HAT complex, at least composed of SUPT3H, GCN5L2, TAF5L, TAF6L, SUPT7L, TADA3L, TAD1L, TAF10, TAF12, TRRAP and TAF9.

The protein localises to the nucleus. Functions as a component of the PCAF complex. The PCAF complex is capable of efficiently acetylating histones in a nucleosomal context. The PCAF complex could be considered as the human version of the yeast SAGA complex. With TAF6L, acts as an epigenetic regulator essential for somatic reprogramming. Regulates target genes through H3K9ac deposition and MYC recruitment which trigger MYC regulatory network to orchestrate gene expression programs to control embryonic stem cell state. The sequence is that of TAF5-like RNA polymerase II p300/CBP-associated factor-associated factor 65 kDa subunit 5L from Homo sapiens (Human).